The primary structure comprises 287 residues: Neuferricin homolog (287 aa).

Positions 1-22 are cleaved as a signal peptide; the sequence is MFGLLRHLFKFQFLFVVAAVLG. The 86-residue stretch at 61-146 folds into the Cytochrome b5 heme-binding domain; sequence GTLFTPAELA…KPDDLIGLAG (86 aa). A coiled-coil region spans residues 175-204; it reads YHHKFLELLEQARDAKRQVEELRARYPGCN.

Belongs to the cytochrome b5 family. MAPR subfamily.

The protein localises to the secreted. Heme-binding protein. This is Neuferricin homolog from Drosophila melanogaster (Fruit fly).